A 107-amino-acid chain; its full sequence is Replication initiation control protein YabA (107 aa).

Residues histidine 81, cysteine 83, cysteine 97, and cysteine 100 each contribute to the Zn(2+) site.

The protein belongs to the YabA family. As to quaternary structure, homotetramer. Interacts with both DnaA and DnaN, acting as a bridge between these two proteins. The cofactor is Zn(2+).

It is found in the cytoplasm. Its subcellular location is the nucleoid. In terms of biological role, involved in control of chromosome replication initiation. Inhibits the cooperative binding of DnaA to the oriC region, thus negatively regulating initiation of chromosome replication. Inhibits the ability of DnaA-ATP to form a helix on DNA; does not disassemble preformed DnaA-DNA helices. Decreases the residence time of DnaA on the chromosome at its binding sites (oriC, replication forks and promoter-binding sites). Tethers DnaA to the replication machinery via the DNA polymerase beta sliding clamp subunit (dnaN). Associates with oriC and other DnaA targets on the chromosome in a DnaA-dependent manner. This is Replication initiation control protein YabA from Streptococcus pyogenes serotype M18 (strain MGAS8232).